Here is a 177-residue protein sequence, read N- to C-terminus: Probable DNA-directed RNA polymerase subunit delta (177 aa).

The region spanning 14–81 is the HTH HARE-type domain; that stretch reads CSMIEVVHSV…GENRWGLRSW (68 aa). Residues 93–177 form a disordered region; sequence PQPKPKKKRK…ETEEEEEEEL (85 aa). Residues 106-177 are compositionally biased toward acidic residues; it reads DGFDDYIEED…ETEEEEEEEL (72 aa).

The protein belongs to the RpoE family. RNAP is composed of a core of 2 alpha, a beta and a beta' subunits. The core is associated with a delta subunit and one of several sigma factors.

In terms of biological role, participates in both the initiation and recycling phases of transcription. In the presence of the delta subunit, RNAP displays an increased specificity of transcription, a decreased affinity for nucleic acids, and an increased efficiency of RNA synthesis because of enhanced recycling. The chain is Probable DNA-directed RNA polymerase subunit delta from Bacillus cereus (strain AH187).